Consider the following 225-residue polypeptide: NAD(P)H-quinone oxidoreductase subunit K, chloroplastic (225 aa).

[4Fe-4S] cluster contacts are provided by C43, C44, C108, and C139.

This sequence belongs to the complex I 20 kDa subunit family. In terms of assembly, NDH is composed of at least 16 different subunits, 5 of which are encoded in the nucleus. It depends on [4Fe-4S] cluster as a cofactor.

It is found in the plastid. The protein localises to the chloroplast thylakoid membrane. The catalysed reaction is a plastoquinone + NADH + (n+1) H(+)(in) = a plastoquinol + NAD(+) + n H(+)(out). It catalyses the reaction a plastoquinone + NADPH + (n+1) H(+)(in) = a plastoquinol + NADP(+) + n H(+)(out). Its function is as follows. NDH shuttles electrons from NAD(P)H:plastoquinone, via FMN and iron-sulfur (Fe-S) centers, to quinones in the photosynthetic chain and possibly in a chloroplast respiratory chain. The immediate electron acceptor for the enzyme in this species is believed to be plastoquinone. Couples the redox reaction to proton translocation, and thus conserves the redox energy in a proton gradient. The polypeptide is NAD(P)H-quinone oxidoreductase subunit K, chloroplastic (Draba nemorosa (Woodland whitlowgrass)).